The sequence spans 498 residues: ATP synthase subunit beta, chloroplastic (498 aa).

Residue 172-179 (GGAGVGKT) coordinates ATP.

This sequence belongs to the ATPase alpha/beta chains family. As to quaternary structure, F-type ATPases have 2 components, CF(1) - the catalytic core - and CF(0) - the membrane proton channel. CF(1) has five subunits: alpha(3), beta(3), gamma(1), delta(1), epsilon(1). CF(0) has four main subunits: a(1), b(1), b'(1) and c(9-12).

It is found in the plastid. Its subcellular location is the chloroplast thylakoid membrane. It carries out the reaction ATP + H2O + 4 H(+)(in) = ADP + phosphate + 5 H(+)(out). In terms of biological role, produces ATP from ADP in the presence of a proton gradient across the membrane. The catalytic sites are hosted primarily by the beta subunits. The polypeptide is ATP synthase subunit beta, chloroplastic (Phormium tenax (New Zealand flax)).